The sequence spans 83 residues: MKASMFLALAGLVLLFVVGYASESEEKEFPRELLSKIFALDDFKGEERGCKGFGDSCTPGKNECCPNYACSSKHKWCKVYLGK.

Residues 1–21 (MKASMFLALAGLVLLFVVGYA) form the signal peptide. Residues 22–48 (SESEEKEFPRELLSKIFALDDFKGEER) constitute a propeptide that is removed on maturation. 3 disulfides stabilise this stretch: C50–C65, C57–C70, and C64–C77. L81 carries the leucine amide modification.

This sequence belongs to the neurotoxin 10 (Hwtx-1) family. 15 (Hntx-3) subfamily. Monomer. Expressed by the venom gland.

Its subcellular location is the secreted. Selective antagonist of neuronal tetrodotoxin (TTX)-sensitive voltage-gated sodium channels (IC(50)=1270 nM on Nav1.1/SCN1A, 270 nM on Nav1.2/SCN2A, 491 nM on Nav1.3/SCN3A and 232 nM on Nav1.7/SCN9A). This toxin suppress Nav1.7 current amplitude without significantly altering the activation, inactivation, and repriming kinetics. Short extreme depolarizations partially activate the toxin-bound channel, indicating voltage-dependent inhibition of this toxin. This toxin increases the deactivation of the Nav1.7 current after extreme depolarizations. The toxin-Nav1.7 complex is gradually dissociated upon prolonged strong depolarizations in a voltage-dependent manner, and the unbound toxin rebinds to Nav1.7 after a long repolarization. Moreover, analysis of chimeric channels showed that the DIIS3-S4 linker is critical for toxin binding to Nav1.7. These data are consistent with this toxin interacting with Nav1.7 site 4 and trapping the domain II voltage sensor in the closed state. This is Hainantoxin-III from Cyriopagopus hainanus (Chinese bird spider).